A 381-amino-acid chain; its full sequence is GDSL esterase/lipase At3g48460 (381 aa).

The signal sequence occupies residues 1 to 26; sequence MSSSISPLLTTAISVAILLFSTISTA. S45 serves as the catalytic Nucleophile. N-linked (GlcNAc...) asparagine glycosylation is found at N112, N140, and N258. Catalysis depends on residues D344 and H347.

This sequence belongs to the 'GDSL' lipolytic enzyme family.

Its subcellular location is the secreted. The protein is GDSL esterase/lipase At3g48460 of Arabidopsis thaliana (Mouse-ear cress).